A 103-amino-acid chain; its full sequence is Small ribosomal subunit protein uS10 (103 aa).

The protein belongs to the universal ribosomal protein uS10 family. As to quaternary structure, part of the 30S ribosomal subunit.

Involved in the binding of tRNA to the ribosomes. The protein is Small ribosomal subunit protein uS10 of Chlorobium limicola (strain DSM 245 / NBRC 103803 / 6330).